The primary structure comprises 98 residues: NADH-ubiquinone oxidoreductase chain 4L (98 aa).

3 helical membrane-spanning segments follow: residues 1–21 (MTLI…GLLM), 29–49 (ALLC…LTIL), and 61–81 (IILL…LVMV).

It belongs to the complex I subunit 4L family. As to quaternary structure, core subunit of respiratory chain NADH dehydrogenase (Complex I) which is composed of 45 different subunits.

The protein localises to the mitochondrion inner membrane. The enzyme catalyses a ubiquinone + NADH + 5 H(+)(in) = a ubiquinol + NAD(+) + 4 H(+)(out). Core subunit of the mitochondrial membrane respiratory chain NADH dehydrogenase (Complex I) which catalyzes electron transfer from NADH through the respiratory chain, using ubiquinone as an electron acceptor. Part of the enzyme membrane arm which is embedded in the lipid bilayer and involved in proton translocation. The chain is NADH-ubiquinone oxidoreductase chain 4L (MT-ND4L) from Balaenoptera borealis (Sei whale).